The sequence spans 592 residues: MTVLKPSHWRVLAELADGLPQHVSQLAREADMKPQQLNGFWQQMPAHIRGLLRQHDGYWRLVRPLAVFDAEGLRDLGERSGFQTALKHECASSNDEILELARIAPDKAHKTICVTHLQSKGRGRQGRKWSHRLGECLMFSFGWAFDRPQYELGSLSPVAALACRRALGCLGLETQIKWPNDLVVGRDKLGGILIETVRAGGKTVAVVGIGINFVLPKEVENAASVQSLFQTASRRGNADAAVLLETLLAELGAVLEQYAEEGFAPFLNEYETANRDHGKAVLLLRDGETVCEGTVKGVDGRGVLHLETAEGEQTVVSGEISLRPDNRSVSVPKRPDSERFLLLEGGNSRLKWAWVENGTFATVGSAPYRDLSPLGAEWAEKADGNVRIVGCAVCGESKKAQVKEQLARKIEWLPSSAQALGIRNHYRHPEEHGSDRWFNALGSRRFSRNACVVVSCGTAVTVDALTDDGHYLGGTIMPGFHLMKESLAVRTANLNRPAGKRYPFPTTTGNAVASGMMDAVCGSIMMMHGRLKEKNGAGKPVDVIITGGGAAKVAEALPPAFLAENTVRVADNLVIHGLLNLIAAEGGESEHA.

A biotin--protein ligase region spans residues 1–329 (MTVLKPSHWR…ISLRPDNRSV (329 aa)). Residues 83 to 259 (QTALKHECAS…ELGAVLEQYA (177 aa)) enclose the BPL/LPL catalytic domain. A type III pantothenate kinase region spans residues 336-592 (DSERFLLLEG…AAEGGESEHA (257 aa)). 344 to 351 (EGGNSRLK) serves as a coordination point for ATP. Residues tyrosine 426 and 433–436 (GSDR) each bind substrate. Aspartate 435 serves as the catalytic Proton acceptor. Threonine 458 is a binding site for ATP. Threonine 508 serves as a coordination point for substrate.

The protein in the N-terminal section; belongs to the biotin--protein ligase family. In the C-terminal section; belongs to the type III pantothenate kinase family. NH4(+) serves as cofactor. The cofactor is K(+).

The protein localises to the cytoplasm. It catalyses the reaction biotin + L-lysyl-[protein] + ATP = N(6)-biotinyl-L-lysyl-[protein] + AMP + diphosphate + H(+). The catalysed reaction is (R)-pantothenate + ATP = (R)-4'-phosphopantothenate + ADP + H(+). The protein operates within cofactor biosynthesis; coenzyme A biosynthesis; CoA from (R)-pantothenate: step 1/5. Functionally, activates biotin to form biotinyl-5'-adenylate and transfers the biotin moiety to biotin-accepting proteins. Catalyzes the phosphorylation of pantothenate (Pan), the first step in CoA biosynthesis. The protein is Bifunctional enzyme BirA/CoaX (birA/coaX) of Neisseria gonorrhoeae (strain ATCC 700825 / FA 1090).